We begin with the raw amino-acid sequence, 293 residues long: 1D-myo-inositol 2-acetamido-2-deoxy-alpha-D-glucopyranoside deacetylase 2 (293 aa).

Residues histidine 6, aspartate 9, and histidine 142 each contribute to the Zn(2+) site.

The protein belongs to the MshB deacetylase family. The cofactor is Zn(2+).

The catalysed reaction is 1D-myo-inositol 2-acetamido-2-deoxy-alpha-D-glucopyranoside + H2O = 1D-myo-inositol 2-amino-2-deoxy-alpha-D-glucopyranoside + acetate. Functionally, catalyzes the deacetylation of 1D-myo-inositol 2-acetamido-2-deoxy-alpha-D-glucopyranoside (GlcNAc-Ins) in the mycothiol biosynthesis pathway. The chain is 1D-myo-inositol 2-acetamido-2-deoxy-alpha-D-glucopyranoside deacetylase 2 from Frankia alni (strain DSM 45986 / CECT 9034 / ACN14a).